A 184-amino-acid polypeptide reads, in one-letter code: MIKEIKQDGEARMQKTLEALESTFSKVRTGRAHPGMLSGVMVSYYGSDTPLNQVASVNVEDSRTLLVQPFDRTMVQAIDKAIREADLGLNPMTADVIRVPMPALTEETRRDMQKLARGEAENSRVSIRNIRRDMMNDIKELAKEKEISEDDEHRASDDIQKITDKYIETIDSRLSKKESDLMSV.

The protein belongs to the RRF family.

The protein localises to the cytoplasm. Functionally, responsible for the release of ribosomes from messenger RNA at the termination of protein biosynthesis. May increase the efficiency of translation by recycling ribosomes from one round of translation to another. This is Ribosome-recycling factor from Psychrobacter arcticus (strain DSM 17307 / VKM B-2377 / 273-4).